The primary structure comprises 96 residues: UPF0235 protein YggU (96 aa).

This sequence belongs to the UPF0235 family.

The protein is UPF0235 protein YggU of Escherichia coli O127:H6 (strain E2348/69 / EPEC).